The following is a 114-amino-acid chain: Ribonuclease P protein component (114 aa).

Belongs to the RnpA family. Consists of a catalytic RNA component (M1 or rnpB) and a protein subunit.

The enzyme catalyses Endonucleolytic cleavage of RNA, removing 5'-extranucleotides from tRNA precursor.. RNaseP catalyzes the removal of the 5'-leader sequence from pre-tRNA to produce the mature 5'-terminus. It can also cleave other RNA substrates such as 4.5S RNA. The protein component plays an auxiliary but essential role in vivo by binding to the 5'-leader sequence and broadening the substrate specificity of the ribozyme. In Borrelia hermsii (strain HS1 / DAH), this protein is Ribonuclease P protein component.